The primary structure comprises 356 residues: Glutamine synthetase (356 aa).

A GS beta-grasp domain is found at 26–105 (IMAEYVWVDA…VLAECWNAGG (80 aa)). Residues 112-356 (FRHDCVKVMD…TKALLQFSLA (245 aa)) form the GS catalytic domain.

This sequence belongs to the glutamine synthetase family. In terms of assembly, homooctamer.

The protein localises to the cytoplasm. The catalysed reaction is L-glutamate + NH4(+) + ATP = L-glutamine + ADP + phosphate + H(+). The protein is Glutamine synthetase (GLN1) of Fusarium solani subsp. phaseoli (Nectria haematococca).